The following is a 218-amino-acid chain: MEPNFWHDKWHQQLIGFHQASVNALLLTHWQQLEIKPQGQVFVPLCGKSLDMCYLAELGHNVLGCELNLSAVEQFYAENQLTVTCEPIGEHQFFDCEQVQIWQGDIFTLAPKITQDISGFYDRAALIAWPESLRQAYVKQLAKLIPQGCRGLLVTLDYPQETLQGPPFAVSPTWVETHLSEYFDITLLACRDVLDDNPRFIKKDVPWLNESAYLLKRK.

The S-adenosyl-L-methionine site is built by tryptophan 10, leucine 45, glutamate 66, and arginine 123.

Belongs to the class I-like SAM-binding methyltransferase superfamily. TPMT family.

The protein localises to the cytoplasm. The catalysed reaction is S-adenosyl-L-methionine + a thiopurine = S-adenosyl-L-homocysteine + a thiopurine S-methylether.. In Shewanella denitrificans (strain OS217 / ATCC BAA-1090 / DSM 15013), this protein is Thiopurine S-methyltransferase.